We begin with the raw amino-acid sequence, 109 residues long: Spermidine export protein MdtI (109 aa).

4 helical membrane passes run 6–26 (WVHA…NVFL), 36–56 (IFGL…SQAV), 64–84 (AYAL…WILF), and 88–108 (LNRK…MVKL).

The protein belongs to the drug/metabolite transporter (DMT) superfamily. Small multidrug resistance (SMR) (TC 2.A.7.1) family. MdtI subfamily. In terms of assembly, forms a complex with MdtJ.

It is found in the cell inner membrane. Functionally, catalyzes the excretion of spermidine. The chain is Spermidine export protein MdtI from Shigella dysenteriae serotype 1 (strain Sd197).